A 753-amino-acid chain; its full sequence is Polyribonucleotide nucleotidyltransferase (753 aa).

Positions 488 and 494 each coordinate Mg(2+). Residues Pro-555–Ile-614 enclose the KH domain. The 69-residue stretch at Gly-624–Lys-692 folds into the S1 motif domain. The tract at residues Lys-692–Gln-753 is disordered. Over residues Ala-699 to Gly-739 the composition is skewed to basic and acidic residues.

The protein belongs to the polyribonucleotide nucleotidyltransferase family. Mg(2+) is required as a cofactor.

The protein localises to the cytoplasm. The catalysed reaction is RNA(n+1) + phosphate = RNA(n) + a ribonucleoside 5'-diphosphate. Functionally, involved in mRNA degradation. Catalyzes the phosphorolysis of single-stranded polyribonucleotides processively in the 3'- to 5'-direction. This is Polyribonucleotide nucleotidyltransferase from Delftia acidovorans (strain DSM 14801 / SPH-1).